Consider the following 299-residue polypeptide: Oxygen-dependent coproporphyrinogen-III oxidase (299 aa).

Serine 92 serves as a coordination point for substrate. Histidine 96 and histidine 106 together coordinate a divalent metal cation. The active-site Proton donor is histidine 106. Asparagine 108–arginine 110 is a binding site for substrate. 2 residues coordinate a divalent metal cation: histidine 145 and histidine 175. The tract at residues tyrosine 239–glutamate 274 is important for dimerization. Glycine 257 to arginine 259 provides a ligand contact to substrate.

It belongs to the aerobic coproporphyrinogen-III oxidase family. As to quaternary structure, homodimer. It depends on a divalent metal cation as a cofactor.

Its subcellular location is the cytoplasm. It carries out the reaction coproporphyrinogen III + O2 + 2 H(+) = protoporphyrinogen IX + 2 CO2 + 2 H2O. It functions in the pathway porphyrin-containing compound metabolism; protoporphyrin-IX biosynthesis; protoporphyrinogen-IX from coproporphyrinogen-III (O2 route): step 1/1. In terms of biological role, involved in the heme biosynthesis. Catalyzes the aerobic oxidative decarboxylation of propionate groups of rings A and B of coproporphyrinogen-III to yield the vinyl groups in protoporphyrinogen-IX. The protein is Oxygen-dependent coproporphyrinogen-III oxidase of Xanthomonas campestris pv. campestris (strain 8004).